The following is a 161-amino-acid chain: Small ribosomal subunit protein uS9 (161 aa).

Belongs to the universal ribosomal protein uS9 family.

This is Small ribosomal subunit protein uS9 from Methylobacterium radiotolerans (strain ATCC 27329 / DSM 1819 / JCM 2831 / NBRC 15690 / NCIMB 10815 / 0-1).